A 467-amino-acid chain; its full sequence is GTPase Der (467 aa).

2 consecutive EngA-type G domains span residues 25–188 (PVVA…PEAP) and 199–372 (RRVA…ASWE). Residues 31–38 (GRPNVGKS), 78–82 (DTGGW), 140–143 (NKAD), 205–212 (GRPNVGKS), 252–256 (DTAGL), and 317–320 (NKWD) each bind GTP. One can recognise a KH-like domain in the interval 373 to 455 (TRVPTAQLNA…PIEISVRARK (83 aa)).

The protein belongs to the TRAFAC class TrmE-Era-EngA-EngB-Septin-like GTPase superfamily. EngA (Der) GTPase family. As to quaternary structure, associates with the 50S ribosomal subunit.

Functionally, GTPase that plays an essential role in the late steps of ribosome biogenesis. The chain is GTPase Der from Salinispora tropica (strain ATCC BAA-916 / DSM 44818 / JCM 13857 / NBRC 105044 / CNB-440).